A 285-amino-acid polypeptide reads, in one-letter code: Small ribosomal subunit protein uS2 (285 aa).

The disordered stretch occupies residues 231-285 (GGKSGQAAAEPMAEWERELLEQHNAQQAEQAEAPAAEAPAEPAEAPAAEAAPQGE). Low complexity predominate over residues 255–285 (AQQAEQAEAPAAEAPAEPAEAPAAEAAPQGE).

Belongs to the universal ribosomal protein uS2 family.

The polypeptide is Small ribosomal subunit protein uS2 (Micrococcus luteus (strain ATCC 4698 / DSM 20030 / JCM 1464 / CCM 169 / CCUG 5858 / IAM 1056 / NBRC 3333 / NCIMB 9278 / NCTC 2665 / VKM Ac-2230) (Micrococcus lysodeikticus)).